The following is a 500-amino-acid chain: Tyrosine decarboxylase 2 (500 aa).

2 consecutive repeat copies span residues 65–122 (EDIR…TELE) and 125–176 (VLDW…GKRS). The 2 X approximate tandem repeats stretch occupies residues 65–176 (EDIRQKIVPG…KFLNRFGKRS (112 aa)). Serine 89 lines the substrate pocket. Pyridoxal 5'-phosphate contacts are provided by alanine 153 and serine 154. Substrate is bound at residue histidine 189. Residues threonine 248 and asparagine 302 each coordinate pyridoxal 5'-phosphate. Residue lysine 305 is modified to N6-(pyridoxal phosphate)lysine.

The protein belongs to the group II decarboxylase family. It depends on pyridoxal 5'-phosphate as a cofactor. As to expression, mostly expressed in bulbs, and, to a lower extent, in stems, roots, leaves and flowers.

It catalyses the reaction L-tyrosine + H(+) = tyramine + CO2. It functions in the pathway alkaloid biosynthesis. Functionally, catalyzes the decarboxylation of L-tyrosine to tyramine, which is converted to norbelladine, a precursor to all Amaryllidaceae alkaloids such as galanthamine, lycorine and haemanthamine, and including haemanthamine- and crinamine-type alkaloids, promising anticancer agents. The polypeptide is Tyrosine decarboxylase 2 (Narcissus pseudonarcissus (Daffodil)).